The following is a 425-amino-acid chain: Glutamyl-tRNA reductase (425 aa).

Substrate is bound by residues 49–52, S107, 112–114, and Q118; these read TCNR and EPQ. C50 (nucleophile) is an active-site residue. 187-192 lines the NADP(+) pocket; that stretch reads GAGETI.

This sequence belongs to the glutamyl-tRNA reductase family. In terms of assembly, homodimer.

The enzyme catalyses (S)-4-amino-5-oxopentanoate + tRNA(Glu) + NADP(+) = L-glutamyl-tRNA(Glu) + NADPH + H(+). It functions in the pathway porphyrin-containing compound metabolism; protoporphyrin-IX biosynthesis; 5-aminolevulinate from L-glutamyl-tRNA(Glu): step 1/2. In terms of biological role, catalyzes the NADPH-dependent reduction of glutamyl-tRNA(Glu) to glutamate 1-semialdehyde (GSA). The protein is Glutamyl-tRNA reductase of Pseudomonas syringae pv. tomato (strain ATCC BAA-871 / DC3000).